Consider the following 1826-residue polypeptide: Transcription initiation factor TFIID subunit 1-like (1826 aa).

Disordered stretches follow at residues 118-141 (DESQRHQQTMGSLQPLYHSDYDED), 532-555 (IPDEKEEATSNSPSKESKKESSLK), and 1252-1276 (RLKRNQEKEKLKGPPEKKPKKMKER). Positions 1252 to 1268 (RLKRNQEKEKLKGPPEK) are enriched in basic and acidic residues. The short motif at 1370–1377 (PPKKKRRV) is the Nuclear localization signal element. Bromo domains lie at 1395-1503 (RRRT…LKEK) and 1517-1626 (LLDD…ITEY). The segment at 1648–1826 (AELESLDPMT…SGEHKDGHGK (179 aa)) is disordered. Over residues 1660 to 1700 (PYTSQPPDMYDTNTSLSTSRDASVFQDESNLSVLDISTATP) the composition is skewed to polar residues. Acidic residues-rich tracts occupy residues 1714–1729 (EDSDVDVEGYDDEEED), 1740–1750 (GDGDLADEEEG), and 1768–1783 (EGEDDEEDAGSDEEGD). The span at 1787–1797 (SAIQLSESGSD) shows a compositional bias: polar residues. Residues 1817-1826 (SGEHKDGHGK) are compositionally biased toward basic and acidic residues.

Belongs to the TAF1 family. Can bind directly to TATA-box binding protein (TBP). Interacts (via bromo domains) with acetylated lysine residues on the N-terminus of histone H1.4, H2A, H2B, H3 and H4 (in vitro). In terms of tissue distribution, testis specific, expressed apparently in germ cells.

The protein localises to the nucleus. Functionally, may act as a functional substitute for TAF1/TAFII250 during male meiosis, when sex chromosomes are transcriptionally silenced. This chain is Transcription initiation factor TFIID subunit 1-like (TAF1L), found in Homo sapiens (Human).